Here is a 214-residue protein sequence, read N- to C-terminus: Putative 3-methyladenine DNA glycosylase (214 aa).

The protein belongs to the DNA glycosylase MPG family.

The polypeptide is Putative 3-methyladenine DNA glycosylase (Mycobacterium leprae (strain Br4923)).